The sequence spans 1077 residues: Zinc finger protein 518B (1077 aa).

The segment covering 9–30 (YTTQVNGGPSSLTMSPKQPNRA) has biased composition (polar residues). The segment at 9–35 (YTTQVNGGPSSLTMSPKQPNRATRTER) is disordered. C2H2-type zinc fingers lie at residues 160–182 (FICS…LVKH) and 188–211 (YRCE…RRVH). The tract at residues 372–397 (TSRGDGGTSECLSTEKGSGGQKKMLS) is disordered. Residue Lys-479 forms a Glycyl lysine isopeptide (Lys-Gly) (interchain with G-Cter in SUMO2) linkage. Disordered stretches follow at residues 561-585 (LVSS…GQVS), 599-622 (GEDK…ETAG), 675-739 (KPSS…GSRQ), and 825-852 (QPLT…RKED). Positions 564–574 (SDRKLEDKQME) are enriched in basic and acidic residues. 2 stretches are compositionally biased toward polar residues: residues 605–621 (SQQP…SETA) and 675–688 (KPSS…QRRS). Residues Lys-847 and Lys-861 each participate in a glycyl lysine isopeptide (Lys-Gly) (interchain with G-Cter in SUMO2) cross-link. The interval 895–914 (QVNSTKKKNKMQANPGRYFK) is disordered. The C2H2-type 3 zinc-finger motif lies at 1039–1061 (FKCWFCGRLYEDQEEWMSHGQRH).

Belongs to the krueppel C2H2-type zinc-finger protein family.

The protein resides in the nucleus. Functionally, through its association with the EHMT1-EHMT2/G9A and PRC2/EED-EZH2 histone methyltransferase complexes may function in gene silencing, regulating repressive post-translational methylation of histone tails at promoters of target genes. This chain is Zinc finger protein 518B (Znf518b), found in Mus musculus (Mouse).